The sequence spans 339 residues: DNA-directed RNA polymerase subunit alpha (339 aa).

The alpha N-terminal domain (alpha-NTD) stretch occupies residues Met1 to Glu233. The interval Gly266 to Phe339 is alpha C-terminal domain (alpha-CTD).

It belongs to the RNA polymerase alpha chain family. In terms of assembly, in plastids the minimal PEP RNA polymerase catalytic core is composed of four subunits: alpha, beta, beta', and beta''. When a (nuclear-encoded) sigma factor is associated with the core the holoenzyme is formed, which can initiate transcription.

Its subcellular location is the plastid. The protein localises to the chloroplast. It catalyses the reaction RNA(n) + a ribonucleoside 5'-triphosphate = RNA(n+1) + diphosphate. In terms of biological role, DNA-dependent RNA polymerase catalyzes the transcription of DNA into RNA using the four ribonucleoside triphosphates as substrates. This is DNA-directed RNA polymerase subunit alpha from Agrostis stolonifera (Creeping bentgrass).